A 228-amino-acid polypeptide reads, in one-letter code: uncharacterized protein (228 aa).

2 disordered regions span residues M1–F62 and S160–V228. Residues A13–S33 show a composition bias toward low complexity. Over residues R167–P176 the composition is skewed to polar residues.

This is an uncharacterized protein from Homo sapiens (Human).